A 234-amino-acid polypeptide reads, in one-letter code: MGQKVNPVGLRLGINRNWTSRWFPSARTAPSNIDEDNKIRKFLKKELYYAGVSEIVIERAAKKLRVTVVAARPGLIIGKKGVDIEKVKEGLKTLIKKEVSINIKEVKRPQADAQLAAENVATQLEKRVAFRRAMKKVMQAALKSGAKGIKVCVSGRLAGAEIARTEWYMEGRVPLHTLRAKIDYGFAEAMTVYGIIGVKVWIFKGEVLQKGIQFEKKEEAKEEREPRRSRRGRQ.

The KH type-2 domain occupies 39–107; it reads IRKFLKKELY…EVSINIKEVK (69 aa).

It belongs to the universal ribosomal protein uS3 family. Part of the 30S ribosomal subunit. Forms a tight complex with proteins S10 and S14.

Functionally, binds the lower part of the 30S subunit head. Binds mRNA in the 70S ribosome, positioning it for translation. This chain is Small ribosomal subunit protein uS3, found in Helicobacter pylori (strain P12).